Consider the following 204-residue polypeptide: MIGKLSGKVDSQGDDYVIIDVNGVGYLVYASGKTLGTLAEGEFYKLFIETHVREEHIHLYGFLTLEEKIFFNLLQSVNGIGTRMALFILSSLTPSDIQIAVNNEDKNIFKAISGVGAKLAERIVLELKGKVAKISSGSAIIKESLNIKNITPVASNEVIKALVNLGFSRFEAQNAVQGIITQNPEISIDELIKTALKNRNSNFS.

Positions 1-63 are domain I; that stretch reads MIGKLSGKVD…EEHIHLYGFL (63 aa). The domain II stretch occupies residues 64-142; it reads TLEEKIFFNL…KISSGSAIIK (79 aa). The flexible linker stretch occupies residues 143-149; sequence ESLNIKN. The interval 150-204 is domain III; it reads ITPVASNEVIKALVNLGFSRFEAQNAVQGIITQNPEISIDELIKTALKNRNSNFS.

The protein belongs to the RuvA family. In terms of assembly, homotetramer. Forms an RuvA(8)-RuvB(12)-Holliday junction (HJ) complex. HJ DNA is sandwiched between 2 RuvA tetramers; dsDNA enters through RuvA and exits via RuvB. An RuvB hexamer assembles on each DNA strand where it exits the tetramer. Each RuvB hexamer is contacted by two RuvA subunits (via domain III) on 2 adjacent RuvB subunits; this complex drives branch migration. In the full resolvosome a probable DNA-RuvA(4)-RuvB(12)-RuvC(2) complex forms which resolves the HJ.

The protein localises to the cytoplasm. Functionally, the RuvA-RuvB-RuvC complex processes Holliday junction (HJ) DNA during genetic recombination and DNA repair, while the RuvA-RuvB complex plays an important role in the rescue of blocked DNA replication forks via replication fork reversal (RFR). RuvA specifically binds to HJ cruciform DNA, conferring on it an open structure. The RuvB hexamer acts as an ATP-dependent pump, pulling dsDNA into and through the RuvAB complex. HJ branch migration allows RuvC to scan DNA until it finds its consensus sequence, where it cleaves and resolves the cruciform DNA. The sequence is that of Holliday junction branch migration complex subunit RuvA from Rickettsia rickettsii (strain Iowa).